Here is a 356-residue protein sequence, read N- to C-terminus: Heat-inducible transcription repressor HrcA (356 aa).

This sequence belongs to the HrcA family.

Functionally, negative regulator of class I heat shock genes (grpE-dnaK-dnaJ and groELS operons). Prevents heat-shock induction of these operons. The protein is Heat-inducible transcription repressor HrcA of Chelativorans sp. (strain BNC1).